A 1012-amino-acid chain; its full sequence is Probable inorganic carbon transporter subunit DabA (1012 aa).

Zn(2+) is bound by residues Cys-489, Asp-491, His-679, and Cys-694.

The protein belongs to the inorganic carbon transporter (TC 9.A.2) DabA family. Forms a complex with DabB. Zn(2+) is required as a cofactor.

It is found in the cell inner membrane. Functionally, part of an energy-coupled inorganic carbon pump. The polypeptide is Probable inorganic carbon transporter subunit DabA (Dechloromonas aromatica (strain RCB)).